The primary structure comprises 48 residues: Small, acid-soluble spore protein O (48 aa).

The interval 1–23 (MTKRKANHVINGMNAAKSQGNGA) is disordered.

The protein belongs to the SspO family.

Its subcellular location is the spore core. The sequence is that of Small, acid-soluble spore protein O from Bacillus pumilus (strain SAFR-032).